Consider the following 147-residue polypeptide: Protein LOL4 (147 aa).

Putative zinc finger regions lie at residues 4–34 (QLIC…LTAV), 44–74 (ELIC…LNST), and 82–112 (HLTC…VNHV).

Its subcellular location is the nucleus. In terms of biological role, putative zinc finger that may be involved in programmed cell death and defense response. This Oryza sativa subsp. japonica (Rice) protein is Protein LOL4 (LOL4).